A 1005-amino-acid chain; its full sequence is MMHHPHPFGSNLANSSEPQQPSGQYLNPAADAYNFDTFEDSDKFSPKGNVAALRNVIHGQLDMKTPTGNSSRYQKPAPPPVDSTPSWAKNVKVYEPNGYVDPHLNKHNMGRVLDGPVNPNKYFQGVPPASYSQVKHNESKPPVPPSTKPPHSAAQALQAQVLQSSKAPSQPQQSQKTSYRIPYDVALDPRHHLGEFDIDDSASIISSCISTFGESSEIAGFSAAAEQRHLYEQYRKKLMEEKNELKEGSETPCVSLSEKVMTSSTENLKNGNNQQNQQPEPQPPSSSIFNSELTPFGHVAPVAKQFEPTNFPPFSPEKESEIKRSIDLESSQLLVKSKSPAPYSTSSTDHYGTIRRKHKPVAIDLSKSSPNLASQSPSNLFFGASFEEKQNRSPMTSTPSYKEQGFKNDSLNDSLNQAFEIASSIETTKNAYEAPPTPKSASHDRSISDTYPVSSSTTSTWPSHTTTPTTTTAAAPIAAVAPQTYTEQQPMSTSMSSSVMSTNMDEPIVVGSHQQIPQQSPDSSPERNEDMSQWYRKMFKQMHRKGEDGSNEGKEQHFINPSNVTDGIGRTTPTASNLGRSRENLSFNQHRPDHPSSYFDSLEHGPNDQYNNQERVKQSNEEELLRLKAEKLAEELRKEKERKHSFIPSSAPSLQNNMDRLNSLLYDFSSDIQEPAHRDYTPQPVMTATAVYKFEPRSARELPLNRGDIIRIIREVDGYWMEGERNGRSGIFPTSYVQINTGNQGDSQKMRAIYPFTARSDTELSLKRGEIITRRRQIDSNWLEGSNQIGIVGIFPASYVEPIEQVEQHIPTIVPNRPKTPKIEDQVYNQVYKPNETVIMQSNQGYYDKAAVVPNNKVRFDLPSGSDSNLQMSLNPHQNQFPPTHTQTSTQQPSNYGMKKIEYEREKVVEEVPPMHMDQYRKLNDEPKNPKKDTNILMNAASLIPKGSEMYRAVYPYQPQKEDELQLYTNDIIFVVEKCDDGWFIGTSLRTGDFGIFPGNYVKRH.

Disordered stretches follow at residues 1-31 (MMHHPHPFGSNLANSSEPQQPSGQYLNPAAD), 61-86 (LDMKTPTGNSSRYQKPAPPPVDSTPS), 99-153 (YVDP…PHSA), 243-292 (NELK…FNSE), 386-409 (FEEKQNRSPMTSTPSYKEQGFKND), 427-475 (TTKN…TAAA), and 542-622 (MHRK…SNEE). A compositionally biased stretch (polar residues) spans 11–25 (NLANSSEPQQPSGQY). Residues 260-269 (VMTSSTENLK) are compositionally biased toward polar residues. Positions 270-279 (NGNNQQNQQP) are enriched in low complexity. A compositionally biased stretch (polar residues) spans 392–409 (RSPMTSTPSYKEQGFKND). Low complexity predominate over residues 448-475 (SDTYPVSSSTTSTWPSHTTTPTTTTAAA). Residues 499–567 (VMSTNMDEPI…FINPSNVTDG (69 aa)) enclose the SoHo domain. Over residues 544–557 (RKGEDGSNEGKEQH) the composition is skewed to basic and acidic residues. The span at 559–589 (INPSNVTDGIGRTTPTASNLGRSRENLSFNQ) shows a compositional bias: polar residues. Residues 610–642 (YNNQERVKQSNEEELLRLKAEKLAEELRKEKER) adopt a coiled-coil conformation. SH3 domains follow at residues 683–742 (QPVM…INTG), 745–805 (GDSQ…PIEQ), and 946–1005 (KGSE…VKRH).

In terms of assembly, may interact with deb-1. Expressed in body wall muscles, muscle arm attachment sites at the nerve ring, all non-striated muscles, and distal tip cells of the gonad. Highly expressed in the origins and insertions of the vulval and anal depressor muscles and the spicule-associated and diagonal muscles of the male tail. Expressed in small puncta throughout the uterus, stomatointestinal muscle and proximal gonadal sheath tissues. Not expressed in the pharynx.

The protein resides in the cell junction. It is found in the adherens junction. Its subcellular location is the cell membrane. It localises to the focal adhesion. Functionally, required for organization of sarcomeres in body wall muscles and for maintaining normal mitochondrial position in myocytes. The polypeptide is Sorbin and SH3 domain-containing protein 1 homolog (Caenorhabditis elegans).